Here is a 505-residue protein sequence, read N- to C-terminus: Dolichyl pyrophosphate Glc1Man9GlcNAc2 alpha-1,3-glucosyltransferase (505 aa).

Over 1 to 3 the chain is Lumenal; sequence MAE. A helical transmembrane segment spans residues 4–24; the sequence is IYPSLVQCAIVATAFKVLLFP. Topologically, residues 25–101 are cytoplasmic; the sequence is AYKSTDFEVH…DSWQTVYFQR (77 aa). The chain crosses the membrane as a helical span at residues 102 to 122; the sequence is WTVIVTELVLLYALQMFVDST. Residues 123–128 lie on the Lumenal side of the membrane; it reads PGVSKR. Residues 129 to 149 form a helical membrane-spanning segment; the sequence is AAHAAAVSILLSPGLLIIDHI. Residues 150-152 lie on the Cytoplasmic side of the membrane; it reads HFQ. The chain crosses the membrane as a helical span at residues 153-169; that stretch reads YNGVMYGILIASLVLAK. The Lumenal portion of the chain corresponds to 170 to 173; it reads KKSS. A helical membrane pass occupies residues 174–194; sequence LLASGLVFAALLCMKHIYLYL. At 195–224 the chain is on the cytoplasmic side; that stretch reads APAYFVYLLRVYCLPPKLSPRSIFRIQFFN. Residues 225-245 form a helical membrane-spanning segment; sequence CVKLGGGIAAIFAAAFGPFAL. The Lumenal segment spans residues 246 to 319; sequence KNQIPQIFSR…TSFAVLPDIT (74 aa). The chain crosses the membrane as a helical span at residues 320–340; the sequence is PRMCFVLTLLFQAIPLIKLFM. The Cytoplasmic portion of the chain corresponds to 341–359; that stretch reads RPTWEGFIGGVTLCGYASF. The helical transmembrane segment at 360-380 threads the bilayer; it reads LFGWHVHEKAILLVIIPFSLI. Residues 381–386 are Lumenal-facing; sequence ALKDRR. The chain crosses the membrane as a helical span at residues 387–407; sequence YLGAFRPLAVAGHVSLFPLIF. The Cytoplasmic portion of the chain corresponds to 408–409; sequence TP. A helical membrane pass occupies residues 410–430; the sequence is AEFPIKTVYTIFWLVLFLMAF. Topologically, residues 431–450 are lumenal; that stretch reads DRLAPAPTRQRLFLFDRFST. The chain crosses the membrane as a helical span at residues 451–471; sequence AYITVSIPLIFYCSLMHGIIF. Residues 472-480 are Cytoplasmic-facing; it reads GKSYEFLPL. The helical transmembrane segment at 481-501 threads the bilayer; sequence MFTSSYSAIGVVGSWLGFMVV. Topologically, residues 502–505 are lumenal; sequence YFTE.

Belongs to the ALG6/ALG8 glucosyltransferase family.

Its subcellular location is the endoplasmic reticulum membrane. It carries out the reaction an alpha-D-Glc-(1-&gt;3)-alpha-D-Man-(1-&gt;2)-alpha-D-Man-(1-&gt;2)-alpha-D-Man-(1-&gt;3)-[alpha-D-Man-(1-&gt;2)-alpha-D-Man-(1-&gt;3)-[alpha-D-Man-(1-&gt;2)-alpha-D-Man-(1-&gt;6)]-alpha-D-Man-(1-&gt;6)]-beta-D-Man-(1-&gt;4)-beta-D-GlcNAc-(1-&gt;4)-alpha-D-GlcNAc-diphospho-di-trans,poly-cis-dolichol + a di-trans,poly-cis-dolichyl beta-D-glucosyl phosphate = an alpha-D-Glc-(1-&gt;3)-alpha-D-Glc-(1-&gt;3)-alpha-D-Man-(1-&gt;2)-alpha-D-Man-(1-&gt;2)-alpha-D-Man-(1-&gt;3)-[alpha-D-Man-(1-&gt;2)-alpha-D-Man-(1-&gt;3)-[alpha-D-Man-(1-&gt;2)-alpha-D-Man-(1-&gt;6)]-alpha-D-Man-(1-&gt;6)]-beta-D-Man-(1-&gt;4)-beta-D-GlcNAc-(1-&gt;4)-alpha-D-GlcNAc-diphospho-di-trans,poly-cis-dolichol + a di-trans,poly-cis-dolichyl phosphate + H(+). It participates in protein modification; protein glycosylation. Its function is as follows. Dolichyl pyrophosphate Glc1Man9GlcNAc2 alpha-1,3-glucosyltransferase that operates in the biosynthetic pathway of dolichol-linked oligosaccharides, the glycan precursors employed in protein asparagine (N)-glycosylation. The assembly of dolichol-linked oligosaccharides begins on the cytosolic side of the endoplasmic reticulum membrane and finishes in its lumen. The sequential addition of sugars to dolichol pyrophosphate produces dolichol-linked oligosaccharides containing fourteen sugars, including two GlcNAcs, nine mannoses and three glucoses. Once assembled, the oligosaccharide is transferred from the lipid to nascent proteins by oligosaccharyltransferases. In the lumen of the endoplasmic reticulum, adds the second glucose residue from dolichyl phosphate glucose (Dol-P-Glc) onto the lipid-linked oligosaccharide intermediate Glc(1)Man(9)GlcNAc(2)-PP-Dol to produce Glc(2)Man(9)GlcNAc(2)-PP-Dol. This chain is Dolichyl pyrophosphate Glc1Man9GlcNAc2 alpha-1,3-glucosyltransferase (alg-8), found in Neurospora crassa (strain ATCC 24698 / 74-OR23-1A / CBS 708.71 / DSM 1257 / FGSC 987).